The sequence spans 1507 residues: DE-cadherin (1507 aa).

Positions 1-69 (MSTSVQRMSR…AISLLSPALA (69 aa)) are cleaved as a signal peptide. A propeptide spanning residues 70 to 261 (LHSPPDKNFS…IYLKRPIDKR (192 aa)) is cleaved from the precursor. Cadherin domains are found at residues 97-195 (VKEE…APAF), 204-301 (MSEN…PPSF), 311-412 (LKEN…IPYY), 420-522 (ILEN…KPHF), 532-633 (LLED…TILE), 631-733 (ILEE…APFL), and 741-835 (WQEN…NDNA). The Extracellular segment spans residues 262–1328 (PGQSYAIIVR…VAFSFGIDRN (1067 aa)). Residues Asn317, Asn466, and Asn552 are each glycosylated (N-linked (GlcNAc...) asparagine). N-linked (GlcNAc...) asparagine glycosylation is found at Asn766, Asn949, Asn983, Asn999, and Asn1073. The EGF-like domain occupies 1084 to 1123 (VQAQCVCEAPLMRRCLNGGSPRYGENDVCDCIDGFTGPHC). 2 cysteine pairs are disulfide-bonded: Cys1098-Cys1112 and Cys1114-Cys1123. Positions 1125–1313 (LVSVAFYGSG…SVFRNIDSGC (189 aa)) constitute a Laminin G-like domain. Residues Asn1145, Asn1274, and Asn1290 are each glycosylated (N-linked (GlcNAc...) asparagine). Cys1287 and Cys1313 form a disulfide bridge. A helical transmembrane segment spans residues 1329 to 1349 (FIIAIIVCLALLLIILLAVVV). The Cytoplasmic segment spans residues 1350–1507 (QKKQKNGWHE…NVDDDQGWRI (158 aa)). The segment at 1350–1507 (QKKQKNGWHE…NVDDDQGWRI (158 aa)) is interaction with Inx2. Positions 1488–1507 (YGEEPSDTDSNVDDDQGWRI) are disordered. Ser1493 carries the post-translational modification Phosphoserine.

Interacts (via cytoplasmic region) with Inx2 (via cytoplasmic loop). Interacts with Hakai. Interacts with Myo31DF. Post-translationally, N-glycosylation is important for biosynthesis and function. In early stage 9 and stage 10 oocytes, expressed in border cells, strongly expressed in polar cells and very weakly expressed in the nurse cells (at protein level). In the embryo, expressed in the leading edge cells of the dorsal epidermis (at protein level). Stage 10 embryos exhibit intense expression in epithelial cells. Stage 14 embryos show expression in the hindgut (at the apical poles of cell-cell boundaries), at the apical junctions of tracheal cells and in the dorsal longitudinal trunk. In stage 16 embryos the glial midline cells of the central nervous system show strong expression.

The protein localises to the cell membrane. The protein resides in the apical cell membrane. Functionally, cadherins are calcium-dependent cell adhesion proteins. In connecting cells they preferentially interact with themselves in a homophilic manner; cadherins may thus contribute to the sorting of heterogeneous cell types. During oogenesis, integral component of the guidance mechanisms that regulate the directional persistent collective migration of the border cell (BC) cluster through the nurse cells to the oocyte. Functions downstream of the two chemoattractant receptors, Pvr and Egfr, to promote BC adhesion between the leader cells of the migrating cluster and the surrounding nurse cells. This adhesion increases Rac1 signaling in the leading cells, which in turn stabilizes DE-cadherin/DE-cadherin adhesions through the formation of forward-directed protrusions which attach/detach to the surrounding nurse cells in order to pull the cluster through the egg chamber to the oocyte. Within the BC cluster, also promotes adhesion between BCs, and between BCs and polar cells which enables the lead BC to communicate direction to the other cells in the cluster, providing polarity to each individual cell and ensuring collective behavior. May function in cell intercalation in the lateral epidermis during germband extension. Contributes to the determination of body left-right asymmetry by enhancing Myo31DF activity and inhibiting Myo61F activity. In Drosophila melanogaster (Fruit fly), this protein is DE-cadherin.